The primary structure comprises 113 residues: Hydrogenase maturation factor HybF (113 aa).

The Ni(2+) site is built by histidine 2 and glutamate 3. Residues cysteine 73, cysteine 76, cysteine 89, and cysteine 92 each contribute to the Zn(2+) site.

Belongs to the HypA/HybF family. HybF subfamily.

Involved in the maturation of [NiFe] hydrogenases. Required for nickel insertion into the metal center of the hydrogenase. This is Hydrogenase maturation factor HybF from Escherichia coli O157:H7.